The following is a 672-amino-acid chain: DNA ligase (672 aa).

NAD(+)-binding positions include 35 to 39 (DAEYD), 84 to 85 (SL), and E116. The active-site N6-AMP-lysine intermediate is the K118. NAD(+)-binding residues include R139, E179, K295, and K319. Positions 413, 416, 431, and 436 each coordinate Zn(2+). Residues 593–672 (PRSAPLTGKT…EEFLRLAGKI (80 aa)) form the BRCT domain.

The protein belongs to the NAD-dependent DNA ligase family. LigA subfamily. Requires Mg(2+) as cofactor. It depends on Mn(2+) as a cofactor.

The catalysed reaction is NAD(+) + (deoxyribonucleotide)n-3'-hydroxyl + 5'-phospho-(deoxyribonucleotide)m = (deoxyribonucleotide)n+m + AMP + beta-nicotinamide D-nucleotide.. In terms of biological role, DNA ligase that catalyzes the formation of phosphodiester linkages between 5'-phosphoryl and 3'-hydroxyl groups in double-stranded DNA using NAD as a coenzyme and as the energy source for the reaction. It is essential for DNA replication and repair of damaged DNA. The chain is DNA ligase from Syntrophus aciditrophicus (strain SB).